The chain runs to 492 residues: NAD(P)H-quinone oxidoreductase subunit 2 A, chloroplastic (492 aa).

Transmembrane regions (helical) follow at residues 6 to 26 (LLLF…GLIL), 39 to 59 (ISWF…ALLF), 81 to 101 (IFQF…VEYI), 106 to 126 (MAIT…MFLC), 131 to 151 (LITI…LSGY), 165 to 185 (YLLM…WLYG), 209 to 229 (PGIL…LSPA), 277 to 297 (WHLL…LIAI), 305 to 325 (MLAY…IVGD), 336 to 356 (YMLF…SFGL), 377 to 397 (ALSL…AGFF), 400 to 420 (LHLF…IGLL), and 464 to 484 (FSMI…NPII).

It belongs to the complex I subunit 2 family. NDH is composed of at least 16 different subunits, 5 of which are encoded in the nucleus.

It localises to the plastid. The protein resides in the chloroplast thylakoid membrane. It catalyses the reaction a plastoquinone + NADH + (n+1) H(+)(in) = a plastoquinol + NAD(+) + n H(+)(out). The enzyme catalyses a plastoquinone + NADPH + (n+1) H(+)(in) = a plastoquinol + NADP(+) + n H(+)(out). NDH shuttles electrons from NAD(P)H:plastoquinone, via FMN and iron-sulfur (Fe-S) centers, to quinones in the photosynthetic chain and possibly in a chloroplast respiratory chain. The immediate electron acceptor for the enzyme in this species is believed to be plastoquinone. Couples the redox reaction to proton translocation, and thus conserves the redox energy in a proton gradient. The polypeptide is NAD(P)H-quinone oxidoreductase subunit 2 A, chloroplastic (Phaseolus vulgaris (Kidney bean)).